The sequence spans 380 residues: Cytochrome b (380 aa).

The next 4 helical transmembrane spans lie at 33–53 (FGSLLGLCLITQILTGLFLAM), 77–98 (WLIRNIHANGASFFFICIYMHI), 113–133 (WNIGVVLLLLVMMTAFVGYVL), and 178–198 (FFAFHFLLPFIIAAATVIHLL). Heme b-binding residues include His-83 and His-97. 2 residues coordinate heme b: His-182 and His-196. His-201 contributes to the a ubiquinone binding site. 4 consecutive transmembrane segments (helical) span residues 226-246 (YKDLLGFVIMLLALTLLALFS), 288-308 (LGGVLALLFSILVLMVVPLLH), 320-340 (ITQFLFWTLVADMIILTWIGG), and 347-367 (FIIIGQIASVLYFALFLVLFP).

It belongs to the cytochrome b family. As to quaternary structure, the cytochrome bc1 complex contains 3 respiratory subunits (MT-CYB, CYC1 and UQCRFS1), 2 core proteins (UQCRC1 and UQCRC2) and probably 6 low-molecular weight proteins. It depends on heme b as a cofactor.

It is found in the mitochondrion inner membrane. In terms of biological role, component of the ubiquinol-cytochrome c reductase complex (complex III or cytochrome b-c1 complex) that is part of the mitochondrial respiratory chain. The b-c1 complex mediates electron transfer from ubiquinol to cytochrome c. Contributes to the generation of a proton gradient across the mitochondrial membrane that is then used for ATP synthesis. This chain is Cytochrome b (mt-cyb), found in Carassius auratus (Goldfish).